The sequence spans 163 residues: 3-isopropylmalate dehydratase small subunit (163 aa).

Belongs to the LeuD family. LeuD type 2 subfamily. As to quaternary structure, heterodimer of LeuC and LeuD.

It carries out the reaction (2R,3S)-3-isopropylmalate = (2S)-2-isopropylmalate. It participates in amino-acid biosynthesis; L-leucine biosynthesis; L-leucine from 3-methyl-2-oxobutanoate: step 2/4. Its function is as follows. Catalyzes the isomerization between 2-isopropylmalate and 3-isopropylmalate, via the formation of 2-isopropylmaleate. The chain is 3-isopropylmalate dehydratase small subunit (leuD) from Pyrococcus horikoshii (strain ATCC 700860 / DSM 12428 / JCM 9974 / NBRC 100139 / OT-3).